The primary structure comprises 685 residues: Coiled-coil domain-containing protein 8 homolog (685 aa).

Residues 93 to 127 are disordered; that stretch reads VGTYDSSNGSDSELSDFDTSKVKGNRSSSGRTRKV. 2 positions are modified to phosphoserine: S142 and S146. Disordered regions lie at residues 207 to 263, 281 to 538, 558 to 579, and 599 to 623; these read QRVK…GTRR, VPPF…KAEA, QRAE…TGAT, and REEA…KQVK. Over residues 219–228 the composition is skewed to polar residues; it reads EVGQTQQAST. Positions 246–256 are enriched in basic and acidic residues; sequence DSSRNTGDRSD. 4 stretches are compositionally biased toward low complexity: residues 299-329, 337-353, 361-401, and 409-420; these read AENQ…PRAE, EAVA…PRAE, EAAA…PRAE, and EAAASPIAEAAA. The span at 425–440 shows a compositional bias: basic and acidic residues; that stretch reads ELVDSPRAETAADPRA. Residues 458–468 are compositionally biased toward low complexity; it reads AAASPIAEAAA. Residues 473–488 show a composition bias toward basic and acidic residues; sequence ELVDSPRAETAADPRA. The span at 505–519 shows a compositional bias: low complexity; it reads EVAASPRAEAAASPR. Positions 558–567 are enriched in basic and acidic residues; sequence QRAEAIDSQR. Residues 611–622 are compositionally biased toward polar residues; sequence SAGSGSRAQKQV. A PxLPxI/L motif; mediates interaction with ANKRA2 motif is present at residues 647–653; sequence PRLPTLP.

In terms of assembly, component of the 3M complex, composed of core components CUL7, CCDC8 and OBSL1. Interacts (via PxLPxI/L motif) with ANKRA2 (via ankyrin repeats); may link the 3M complex to histone deacetylases including HDAC4 and HDAC5.

Its subcellular location is the cytoplasm. It localises to the cytoskeleton. It is found in the microtubule organizing center. The protein localises to the centrosome. Core component of the 3M complex, a complex required to regulate microtubule dynamics and genome integrity. It is unclear how the 3M complex regulates microtubules, it could act by controlling the level of a microtubule stabilizer. Required for localization of CUL7 to the centrosome. The polypeptide is Coiled-coil domain-containing protein 8 homolog (Ccdc8) (Mus musculus (Mouse)).